The chain runs to 561 residues: 7-keto 8-aminopelargonic acid transporter (561 aa).

Topologically, residues 1–49 (MNRVGAVFLFVYERNFFLSIVPDRHRTEIRMSSSERSEVKFDKHFNWWS) are cytoplasmic. A helical membrane pass occupies residues 50-70 (LLGIAFSLSCSWVGISASMAV). The Extracellular segment spans residues 71-77 (GIASGGP). A helical transmembrane segment spans residues 78-98 (LLIIYGLIIAAFFSLMCGISL). Over 99-160 (GDFAAILPNS…NVEVSSKFQK (62 aa)) the chain is Cytoplasmic. A helical membrane pass occupies residues 161–181 (VSSMVVGLLNYFGAIFTTASI). The Extracellular portion of the chain corresponds to 182-204 (CSSLSMSCIGIHKLLHPDYELKH). Residues 205–225 (WHVFVGYECINAVLTLFNIYS) form a helical membrane-spanning segment. Topologically, residues 226–230 (TPLPY) are cytoplasmic. The chain crosses the membrane as a helical span at residues 231 to 251 (ISQFGLYTSLLSFAMTFIICI). The Extracellular segment spans residues 252 to 281 (VSRSDNTVDPWPKASNIFGSFDNQTGWNSS). A helical membrane pass occupies residues 282–302 (GMAFVVGLVNPIWAFVGIDSA). Topologically, residues 303–321 (THMIDEVGYSKSRFLVPKV) are cytoplasmic. The helical transmembrane segment at 322–342 (IITTIIVGFVTSFIYCVGLFF) threads the bilayer. The Extracellular portion of the chain corresponds to 343–369 (CITDQTAVVESILPIVEIFYQATGNRN). The chain crosses the membrane as a helical span at residues 370–390 (LSVFLQCMCITTGFVSGIASG). Residues 391–439 (TWQSRILQSFGKSYAPFYKEGSLGNKSLKKLAVLTPGFKSPLYAHFLSQ) are Cytoplasmic-facing. The helical transmembrane segment at 440-460 (ICVTIIGCIFMGSSTAFNAII) threads the bilayer. Threonine 461 is a topological domain (extracellular). A helical membrane pass occupies residues 462 to 482 (ACITLLLMSYAVPSFIFLFVI). Residues 483 to 507 (KKEKFIHRIESDVNCVSRPNRRRMS) lie on the Cytoplasmic side of the membrane. Residues 508 to 528 (MIPHIICILWTLFCLVFLSFP) form a helical membrane-spanning segment. The Extracellular portion of the chain corresponds to 529–540 (YTLPVTAGNMNY). The chain crosses the membrane as a helical span at residues 541 to 560 (TSVVYAVVFCIISIVVFPTC). A topological domain (cytoplasmic) is located at residue isoleucine 561.

It belongs to the amino acid-polyamine-organocation (APC) superfamily.

The protein localises to the membrane. Functionally, transport into the cell of 7-keto 8-aminopelargonic acid. In Saccharomyces cerevisiae (strain ATCC 204508 / S288c) (Baker's yeast), this protein is 7-keto 8-aminopelargonic acid transporter (BIO5).